We begin with the raw amino-acid sequence, 1047 residues long: Ras GTPase-activating protein 1 (1047 aa).

Met-1 is modified (N-acetylmethionine). An SH2 1 domain is found at 181–272 (WYHGKLDRTI…LKGEKLLYPV (92 aa)). In terms of domain architecture, SH3 spans 279–341 (EDRRRVRAIL…VEDLVEEVGR (63 aa)). The SH2 2 domain occupies 351 to 441 (WFHGKISKQE…VEGYYLKEPV (91 aa)). The PH domain occupies 474 to 577 (NIVKKGYLLK…WMKGLQAFCN (104 aa)). Residues 577–690 (NLRKSSPGTS…QKGHATDEWF (114 aa)) form the C2 domain. Tyr-615 bears the Phosphotyrosine mark. A Ras-GAP domain is found at 764–974 (KLESLLLCTL…HRMIMFLDEL (211 aa)). A Phosphoserine modification is found at Ser-831.

In terms of assembly, interacts with SQSTM1. Interacts with SPSB1; the interaction does not promote degradation. Interacts with CAV2 (tyrosine phosphorylated form). Directly interacts with NCK1. Interacts with PDGFRB (tyrosine phosphorylated). Interacts (via SH2 domain) with the 'Tyr-9' phosphorylated form of PDPK1. Interacts with tyrosine-phosphorylated EPHB4. Post-translationally, the N-terminus is blocked. In terms of processing, phosphorylated by SRC and LCK. The phosphorylation SRC inhibits its ability to stimulate the Ras-GTPase activity, whereas phosphorylation by LCK does not display any effect on stimulation activity. In placental villi, detected only in the trophoblast layer (cytotrophoblast and syncytiotrophoblast). Not detected in stromal, endothelial or Hofbauer cells (at protein level).

Its subcellular location is the cytoplasm. Inhibitory regulator of the Ras-cyclic AMP pathway. Stimulates the GTPase of normal but not oncogenic Ras p21; this stimulation may be further increased in the presence of NCK1. The polypeptide is Ras GTPase-activating protein 1 (RASA1) (Homo sapiens (Human)).